The primary structure comprises 72 residues: Inner membrane protein YmgF (72 aa).

Topologically, residues 1-9 (MNNSNNLDY) are cytoplasmic. A helical transmembrane segment spans residues 10–30 (FTLYIIFSIAFMLITLLVILI). Over 31–34 (AKPS) the chain is Periplasmic. Residues 35–55 (TGLGEVLVTINLLNALVWLAI) traverse the membrane as a helical segment. The Cytoplasmic portion of the chain corresponds to 56–72 (NLVNRLRERLVNHRDQQ).

In terms of assembly, interacts with FtsL, FtsQ, FtsI, FtsN, and probably many other cell division proteins.

It is found in the cell inner membrane. Could be involved in cell division. May participate in the stabilization of the cell divisome under specific conditions. The polypeptide is Inner membrane protein YmgF (ymgF) (Escherichia coli (strain K12)).